A 372-amino-acid polypeptide reads, in one-letter code: Germination protease (372 aa).

The propeptide occupies 1–15 (MNRSIDLSMYSVRTD).

The protein belongs to the peptidase A25 family. As to quaternary structure, homotetramer. Post-translationally, autoproteolytically processed. The inactive tetrameric zymogen termed p46 autoprocesses to a smaller form termed p41, which is active only during spore germination.

It carries out the reaction Endopeptidase action with P4 Glu or Asp, P1 preferably Glu &gt; Asp, P1' hydrophobic and P2' Ala.. In terms of biological role, initiates the rapid degradation of small, acid-soluble proteins during spore germination. The protein is Germination protease of Geobacillus sp. (strain WCH70).